A 311-amino-acid chain; its full sequence is Acetyl-coenzyme A carboxylase carboxyl transferase subunit alpha (311 aa).

Positions 36–286 (NLSKEISKVY…ANYFISELAE (251 aa)) constitute a CoA carboxyltransferase C-terminal domain.

It belongs to the AccA family. In terms of assembly, acetyl-CoA carboxylase is a heterohexamer composed of biotin carboxyl carrier protein (AccB), biotin carboxylase (AccC) and two subunits each of ACCase subunit alpha (AccA) and ACCase subunit beta (AccD).

The protein resides in the cytoplasm. It carries out the reaction N(6)-carboxybiotinyl-L-lysyl-[protein] + acetyl-CoA = N(6)-biotinyl-L-lysyl-[protein] + malonyl-CoA. Its pathway is lipid metabolism; malonyl-CoA biosynthesis; malonyl-CoA from acetyl-CoA: step 1/1. Its function is as follows. Component of the acetyl coenzyme A carboxylase (ACC) complex. First, biotin carboxylase catalyzes the carboxylation of biotin on its carrier protein (BCCP) and then the CO(2) group is transferred by the carboxyltransferase to acetyl-CoA to form malonyl-CoA. The protein is Acetyl-coenzyme A carboxylase carboxyl transferase subunit alpha of Campylobacter concisus (strain 13826).